A 243-amino-acid polypeptide reads, in one-letter code: Peptidase E (243 aa).

Catalysis depends on charge relay system residues Ser118, Asp133, and His155.

This sequence belongs to the peptidase S51 family.

The protein resides in the cytoplasm. It carries out the reaction Dipeptidase E catalyzes the hydrolysis of dipeptides Asp-|-Xaa. It does not act on peptides with N-terminal Glu, Asn or Gln, nor does it cleave isoaspartyl peptides.. Functionally, hydrolyzes dipeptides containing N-terminal aspartate residues. May play a role in allowing the cell to use peptide aspartate to spare carbon otherwise required for the synthesis of the aspartate family of amino acids. The protein is Peptidase E of Streptomyces coelicolor (strain ATCC BAA-471 / A3(2) / M145).